A 309-amino-acid chain; its full sequence is Elongation factor Ts (309 aa).

An involved in Mg(2+) ion dislocation from EF-Tu region spans residues 82–85; the sequence is TDFV.

The protein belongs to the EF-Ts family.

It localises to the cytoplasm. Its function is as follows. Associates with the EF-Tu.GDP complex and induces the exchange of GDP to GTP. It remains bound to the aminoacyl-tRNA.EF-Tu.GTP complex up to the GTP hydrolysis stage on the ribosome. In Rickettsia peacockii (strain Rustic), this protein is Elongation factor Ts.